Here is a 147-residue protein sequence, read N- to C-terminus: MKLTTKSHYSVKALLDLALQPDYGPASVKAIAERQNIPGPYLEKLLITLRRAGIVNAYRGVRGGYQLAQAPDQISLGQILAALEESLEPFPQYGDDQSLAEDWVTLSVWRQLHQKFVKALYSITLADLYYDARSWQAAQGEGINFIV.

The 129-residue stretch at 2–130 (KLTTKSHYSV…YSITLADLYY (129 aa)) folds into the HTH rrf2-type domain.

This is Putative HTH-type transcriptional regulator slr0846 from Synechocystis sp. (strain ATCC 27184 / PCC 6803 / Kazusa).